The primary structure comprises 161 residues: DNA-directed RNA polymerase 18 kDa subunit (161 aa).

Belongs to the poxviridae DNA-directed RNA polymerase 18 kDa subunit family. As to quaternary structure, the DNA-dependent RNA polymerase used for intermediate and late genes expression consists of eight subunits 147 kDa, 133 kDa, 35 kDa, 30 kDa, 22 kDa, 19 kDa, 18 kDa and 7 kDa totalling more than 500 kDa in mass. The same holoenzyme, with the addition of the transcription-specificity factor RAP94, is used for early gene expression.

It localises to the virion. The catalysed reaction is RNA(n) + a ribonucleoside 5'-triphosphate = RNA(n+1) + diphosphate. Functionally, part of the DNA-dependent RNA polymerase which catalyzes the transcription of viral DNA into RNA using the four ribonucleoside triphosphates as substrates. Responsible for the transcription of early, intermediate and late genes. DNA-dependent RNA polymerase associates with the early transcription factor (ETF) thereby allowing the early genes transcription. Late transcription, and probably also intermediate transcription, require newly synthesized RNA polymerase. This Vertebrata (FPV) protein is DNA-directed RNA polymerase 18 kDa subunit (RPO18).